The following is a 371-amino-acid chain: 4-hydroxy-3-methylbut-2-en-1-yl diphosphate synthase (flavodoxin) (371 aa).

Cysteine 272, cysteine 275, cysteine 307, and glutamate 314 together coordinate [4Fe-4S] cluster.

The protein belongs to the IspG family. It depends on [4Fe-4S] cluster as a cofactor.

The enzyme catalyses (2E)-4-hydroxy-3-methylbut-2-enyl diphosphate + oxidized [flavodoxin] + H2O + 2 H(+) = 2-C-methyl-D-erythritol 2,4-cyclic diphosphate + reduced [flavodoxin]. It participates in isoprenoid biosynthesis; isopentenyl diphosphate biosynthesis via DXP pathway; isopentenyl diphosphate from 1-deoxy-D-xylulose 5-phosphate: step 5/6. Its function is as follows. Converts 2C-methyl-D-erythritol 2,4-cyclodiphosphate (ME-2,4cPP) into 1-hydroxy-2-methyl-2-(E)-butenyl 4-diphosphate. This is 4-hydroxy-3-methylbut-2-en-1-yl diphosphate synthase (flavodoxin) from Pseudomonas paraeruginosa (strain DSM 24068 / PA7) (Pseudomonas aeruginosa (strain PA7)).